Reading from the N-terminus, the 310-residue chain is Ribosomal RNA small subunit methyltransferase H (310 aa).

S-adenosyl-L-methionine is bound by residues 32 to 34 (GGH), Asp-52, Phe-79, Asp-100, and Gln-107.

This sequence belongs to the methyltransferase superfamily. RsmH family.

The protein resides in the cytoplasm. The catalysed reaction is cytidine(1402) in 16S rRNA + S-adenosyl-L-methionine = N(4)-methylcytidine(1402) in 16S rRNA + S-adenosyl-L-homocysteine + H(+). Its function is as follows. Specifically methylates the N4 position of cytidine in position 1402 (C1402) of 16S rRNA. The sequence is that of Ribosomal RNA small subunit methyltransferase H from Bacillus cytotoxicus (strain DSM 22905 / CIP 110041 / 391-98 / NVH 391-98).